Consider the following 89-residue polypeptide: UPF0147 protein Msed_2034 (89 aa).

Belongs to the UPF0147 family.

In Metallosphaera sedula (strain ATCC 51363 / DSM 5348 / JCM 9185 / NBRC 15509 / TH2), this protein is UPF0147 protein Msed_2034.